We begin with the raw amino-acid sequence, 290 residues long: Poly-beta-1,6-N-acetyl-D-glucosamine N-deacetylase (290 aa).

Residues 1–28 (MKYRKFIILVLSILIILPVSTLDGHHIA) form the signal peptide. The 177-residue stretch at 114 to 290 (RSVWINFDDM…KRWDGFHEKD (177 aa)) folds into the NodB homology domain.

Belongs to the polysaccharide deacetylase family.

It is found in the secreted. It localises to the cell wall. Catalyzes the N-deacetylation of poly-beta-1,6-N-acetyl-D-glucosamine (PNAG, also referred to as PIA), a biofilm adhesin polysaccharide. N-deacetylation is crucial for attachment of the polysaccharide to the bacterial cell surface; it leads to the introduction of positive charges in the otherwise neutral PIA polymer, allowing electrostatic interactions. The chain is Poly-beta-1,6-N-acetyl-D-glucosamine N-deacetylase (icaB) from Staphylococcus aureus (strain NCTC 8325 / PS 47).